A 425-amino-acid polypeptide reads, in one-letter code: Histidine--tRNA ligase (425 aa).

Belongs to the class-II aminoacyl-tRNA synthetase family. In terms of assembly, homodimer.

The protein localises to the cytoplasm. It catalyses the reaction tRNA(His) + L-histidine + ATP = L-histidyl-tRNA(His) + AMP + diphosphate + H(+). The chain is Histidine--tRNA ligase from Erwinia tasmaniensis (strain DSM 17950 / CFBP 7177 / CIP 109463 / NCPPB 4357 / Et1/99).